The primary structure comprises 184 residues: Photosystem I assembly protein Ycf4 (184 aa).

2 consecutive transmembrane segments (helical) span residues 22–42 (VCWA…GTSS) and 57–77 (IIFF…LFIS).

This sequence belongs to the Ycf4 family.

It is found in the plastid. The protein localises to the chloroplast thylakoid membrane. In terms of biological role, seems to be required for the assembly of the photosystem I complex. The polypeptide is Photosystem I assembly protein Ycf4 (Morus indica (Mulberry)).